A 709-amino-acid chain; its full sequence is Acyl-coenzyme A oxidase 4 (709 aa).

Over residues M1–Q12 the composition is skewed to polar residues. Positions M1 to W29 are disordered.

It belongs to the acyl-CoA oxidase family. Homooctamer. FAD serves as cofactor.

The protein resides in the peroxisome. The catalysed reaction is a 2,3-saturated acyl-CoA + O2 = a (2E)-enoyl-CoA + H2O2. Its pathway is lipid metabolism; peroxisomal fatty acid beta-oxidation. The chain is Acyl-coenzyme A oxidase 4 (POX4) from Candida tropicalis (Yeast).